Consider the following 280-residue polypeptide: Eukaryotic translation initiation factor 3 subunit F-1 (280 aa).

The region spanning 8–138 (VRVHPVVLFQ…LRAYVCIQLG (131 aa)) is the MPN domain.

Belongs to the eIF-3 subunit F family. As to quaternary structure, component of the eukaryotic translation initiation factor 3 (eIF-3) complex. The eIF-3 complex interacts with pix.

The protein localises to the cytoplasm. Component of the eukaryotic translation initiation factor 3 (eIF-3) complex, which is involved in protein synthesis of a specialized repertoire of mRNAs and, together with other initiation factors, stimulates binding of mRNA and methionyl-tRNAi to the 40S ribosome. The eIF-3 complex specifically targets and initiates translation of a subset of mRNAs involved in cell proliferation. The protein is Eukaryotic translation initiation factor 3 subunit F-1 of Drosophila willistoni (Fruit fly).